We begin with the raw amino-acid sequence, 389 residues long: S-adenosylmethionine synthase (389 aa).

Position 15 (H15) interacts with ATP. D17 serves as a coordination point for Mg(2+). E43 is a binding site for K(+). Residues E56 and Q99 each coordinate L-methionine. Positions 99-109 are flexible loop; that stretch reads QSPDIAQGVNE. Residues 166-168, 234-235, D243, 249-250, A266, and K270 each bind ATP; these read DAK, RF, and RK. D243 is an L-methionine binding site. K274 lines the L-methionine pocket.

It belongs to the AdoMet synthase family. Homotetramer; dimer of dimers. It depends on Mg(2+) as a cofactor. Requires K(+) as cofactor.

Its subcellular location is the cytoplasm. It carries out the reaction L-methionine + ATP + H2O = S-adenosyl-L-methionine + phosphate + diphosphate. It functions in the pathway amino-acid biosynthesis; S-adenosyl-L-methionine biosynthesis; S-adenosyl-L-methionine from L-methionine: step 1/1. Its function is as follows. Catalyzes the formation of S-adenosylmethionine (AdoMet) from methionine and ATP. The overall synthetic reaction is composed of two sequential steps, AdoMet formation and the subsequent tripolyphosphate hydrolysis which occurs prior to release of AdoMet from the enzyme. This is S-adenosylmethionine synthase from Neisseria meningitidis serogroup C / serotype 2a (strain ATCC 700532 / DSM 15464 / FAM18).